A 222-amino-acid chain; its full sequence is N-(5'-phosphoribosyl)anthranilate isomerase (222 aa).

The protein belongs to the TrpF family.

The catalysed reaction is N-(5-phospho-beta-D-ribosyl)anthranilate = 1-(2-carboxyphenylamino)-1-deoxy-D-ribulose 5-phosphate. The protein operates within amino-acid biosynthesis; L-tryptophan biosynthesis; L-tryptophan from chorismate: step 3/5. The protein is N-(5'-phosphoribosyl)anthranilate isomerase of Rhizobium johnstonii (strain DSM 114642 / LMG 32736 / 3841) (Rhizobium leguminosarum bv. viciae).